A 139-amino-acid polypeptide reads, in one-letter code: Small ribosomal subunit protein uS19 (139 aa).

This sequence belongs to the universal ribosomal protein uS19 family.

Its function is as follows. Protein S19 forms a complex with S13 that binds strongly to the 16S ribosomal RNA. The protein is Small ribosomal subunit protein uS19 of Ignicoccus hospitalis (strain KIN4/I / DSM 18386 / JCM 14125).